Consider the following 140-residue polypeptide: ATP synthase epsilon chain (140 aa).

Belongs to the ATPase epsilon chain family. In terms of assembly, F-type ATPases have 2 components, CF(1) - the catalytic core - and CF(0) - the membrane proton channel. CF(1) has five subunits: alpha(3), beta(3), gamma(1), delta(1), epsilon(1). CF(0) has three main subunits: a, b and c.

It is found in the cell inner membrane. Produces ATP from ADP in the presence of a proton gradient across the membrane. This is ATP synthase epsilon chain from Xylella fastidiosa (strain Temecula1 / ATCC 700964).